A 259-amino-acid chain; its full sequence is Deoxyribose-phosphate aldolase (259 aa).

The active-site Proton donor/acceptor is D102. K167 acts as the Schiff-base intermediate with acetaldehyde in catalysis. The active-site Proton donor/acceptor is K201.

Belongs to the DeoC/FbaB aldolase family. DeoC type 2 subfamily.

Its subcellular location is the cytoplasm. The catalysed reaction is 2-deoxy-D-ribose 5-phosphate = D-glyceraldehyde 3-phosphate + acetaldehyde. The protein operates within carbohydrate degradation; 2-deoxy-D-ribose 1-phosphate degradation; D-glyceraldehyde 3-phosphate and acetaldehyde from 2-deoxy-alpha-D-ribose 1-phosphate: step 2/2. Its function is as follows. Catalyzes a reversible aldol reaction between acetaldehyde and D-glyceraldehyde 3-phosphate to generate 2-deoxy-D-ribose 5-phosphate. This Escherichia coli O8 (strain IAI1) protein is Deoxyribose-phosphate aldolase.